The chain runs to 446 residues: N-succinylarginine dihydrolase (446 aa).

Substrate contacts are provided by residues 19–28 (SGLSYGNVAS), Asn-110, and 137–138 (HR). Residue Glu-174 is part of the active site. Residue Arg-214 coordinates substrate. Residue His-250 is part of the active site. Residues Asp-252 and Asn-363 each contribute to the substrate site. Residue Cys-369 is the Nucleophile of the active site.

It belongs to the succinylarginine dihydrolase family. As to quaternary structure, homodimer.

It carries out the reaction N(2)-succinyl-L-arginine + 2 H2O + 2 H(+) = N(2)-succinyl-L-ornithine + 2 NH4(+) + CO2. It participates in amino-acid degradation; L-arginine degradation via AST pathway; L-glutamate and succinate from L-arginine: step 2/5. Catalyzes the hydrolysis of N(2)-succinylarginine into N(2)-succinylornithine, ammonia and CO(2). The protein is N-succinylarginine dihydrolase of Hahella chejuensis (strain KCTC 2396).